The following is a 398-amino-acid chain: ATP-dependent RNA helicase RhlB (398 aa).

A Q motif motif is present at residues 9–37 (TRFHDFKLSNELMHAIHDLGFPYCTPIQA). The Helicase ATP-binding domain occupies 40 to 220 (LGYTLRGQDA…KQWTTNPAIV (181 aa)). 53–60 (AQTGTGKT) contacts ATP. Positions 166–169 (DEAD) match the DEAD box motif. The region spanning 243–393 (DKYKLLYNLV…MPPDELLKPV (151 aa)) is the Helicase C-terminal domain.

The protein belongs to the DEAD box helicase family. RhlB subfamily. As to quaternary structure, component of the RNA degradosome, which is a multiprotein complex involved in RNA processing and mRNA degradation.

The protein resides in the cytoplasm. The enzyme catalyses ATP + H2O = ADP + phosphate + H(+). Functionally, DEAD-box RNA helicase involved in RNA degradation. Has RNA-dependent ATPase activity and unwinds double-stranded RNA. This is ATP-dependent RNA helicase RhlB from Pseudomonas putida (strain ATCC 47054 / DSM 6125 / CFBP 8728 / NCIMB 11950 / KT2440).